A 299-amino-acid chain; its full sequence is 4-diphosphocytidyl-2-C-methyl-D-erythritol kinase (299 aa).

Residue Lys11 is part of the active site. Residue 94–104 (PQGGGLGGGSS) coordinates ATP. Asp136 is an active-site residue.

It belongs to the GHMP kinase family. IspE subfamily.

The enzyme catalyses 4-CDP-2-C-methyl-D-erythritol + ATP = 4-CDP-2-C-methyl-D-erythritol 2-phosphate + ADP + H(+). It functions in the pathway isoprenoid biosynthesis; isopentenyl diphosphate biosynthesis via DXP pathway; isopentenyl diphosphate from 1-deoxy-D-xylulose 5-phosphate: step 3/6. Functionally, catalyzes the phosphorylation of the position 2 hydroxy group of 4-diphosphocytidyl-2C-methyl-D-erythritol. This chain is 4-diphosphocytidyl-2-C-methyl-D-erythritol kinase, found in Bordetella bronchiseptica (strain ATCC BAA-588 / NCTC 13252 / RB50) (Alcaligenes bronchisepticus).